The chain runs to 448 residues: Phosphoglucosamine mutase (448 aa).

The Phosphoserine intermediate role is filled by Ser100. The Mg(2+) site is built by Ser100, Asp240, Asp242, and Asp244. Ser100 carries the post-translational modification Phosphoserine.

This sequence belongs to the phosphohexose mutase family. Mg(2+) serves as cofactor. In terms of processing, activated by phosphorylation.

The catalysed reaction is alpha-D-glucosamine 1-phosphate = D-glucosamine 6-phosphate. Its function is as follows. Catalyzes the conversion of glucosamine-6-phosphate to glucosamine-1-phosphate. In Bacillus cereus (strain B4264), this protein is Phosphoglucosamine mutase.